The chain runs to 880 residues: Valine--tRNA ligase (880 aa).

A 'HIGH' region motif is present at residues 48 to 58; it reads PNVTGKLHLGH. Positions 524 to 528 match the 'KMSKS' region motif; the sequence is KMSKS. Lysine 527 lines the ATP pocket. The stretch at 808-879 forms a coiled coil; the sequence is LAGLINIEEE…VKERIAQLRS (72 aa).

Belongs to the class-I aminoacyl-tRNA synthetase family. ValS type 1 subfamily. Monomer.

The protein localises to the cytoplasm. It catalyses the reaction tRNA(Val) + L-valine + ATP = L-valyl-tRNA(Val) + AMP + diphosphate. Its function is as follows. Catalyzes the attachment of valine to tRNA(Val). As ValRS can inadvertently accommodate and process structurally similar amino acids such as threonine, to avoid such errors, it has a 'posttransfer' editing activity that hydrolyzes mischarged Thr-tRNA(Val) in a tRNA-dependent manner. The chain is Valine--tRNA ligase from Enterococcus faecalis (strain ATCC 700802 / V583).